A 317-amino-acid chain; its full sequence is Prenyl transferase paxC (317 aa).

The substrate site is built by Lys53 and His86. Positions 93 and 97 each coordinate Mg(2+). Substrate is bound by residues Arg102, Lys186, Thr187, Gln216, Asn223, and Lys233.

It belongs to the FPP/GGPP synthase family.

It functions in the pathway secondary metabolite biosynthesis. Functionally, prenyl transferase; part of the gene cluster that mediates the biosynthesis of paxalline, a mycotoxin that acts as an inhibitor of mammalian maxi-K channels. PaxG, the geranylgeranyl diphosphate (GGPP) synthase is proposed to catalyze the first step in paxilline biosynthesis. Condensation of indole-3-glycerol phosphate with GGPP by paxC then forms 3-geranylgeranylindole (3-GGI), followed by epoxidation and cyclization of this intermediate (by paxM and paxB) to form paspaline. Paspaline is subsequently converted to 13-desoxypaxilline by paxP, the latter being then converted to paxilline by paxQ. Finally paxilline can be mono- and di-prenylated by paxD. The sequence is that of Prenyl transferase paxC from Penicillium paxilli.